The primary structure comprises 365 residues: MKIDGRPYRTIFPEADGDAVMVIDQTRLPFAFELKRLTNLDDAAVAIRTMVVRGAPLIGVTAAYGMALAMRQDASEAGIERASATLAATRPTAINLRWALDRMAAVLRRAPESAREALAFTEAAAIADEDVASCRAIGEHGAKILSEIAAKKDGPVNVLTHCNAGWLATVDWGTALAPIYVAHDAGVPVHVFVDETRPRNQGAALTAFELNAHGVPHTVIADNAGGHLMQHGQVDVCIVGSDRTTASGDVCNKIGTYLKALAATDNRIPFYAALPFSTIDWTLSDGVRDIPIEERDAREVTHLTGRTDDGAFATVAVVSPGSPVANPAFDVTPARLVTGIITERGVCDASEDGLAGLYPERRRAA.

Substrate-binding positions include 53-55 (RGA), Arg-90, and Gln-201. The active-site Proton donor is the Asp-242. 252-253 (NK) lines the substrate pocket.

This sequence belongs to the eIF-2B alpha/beta/delta subunits family. MtnA subfamily.

It carries out the reaction 5-(methylsulfanyl)-alpha-D-ribose 1-phosphate = 5-(methylsulfanyl)-D-ribulose 1-phosphate. The protein operates within amino-acid biosynthesis; L-methionine biosynthesis via salvage pathway; L-methionine from S-methyl-5-thio-alpha-D-ribose 1-phosphate: step 1/6. In terms of biological role, catalyzes the interconversion of methylthioribose-1-phosphate (MTR-1-P) into methylthioribulose-1-phosphate (MTRu-1-P). This chain is Methylthioribose-1-phosphate isomerase, found in Methylorubrum extorquens (strain CM4 / NCIMB 13688) (Methylobacterium extorquens).